The following is a 369-amino-acid chain: Glycerol-3-phosphate dehydrogenase [NAD(P)+] (369 aa).

Positions 6, 7, 27, 28, and 101 each coordinate NADPH. Residues Lys101 and Gly131 each coordinate sn-glycerol 3-phosphate. NADPH is bound at residue Ala135. Sn-glycerol 3-phosphate contacts are provided by Lys186, Asp239, Ser249, Arg250, and Asn251. Lys186 (proton acceptor) is an active-site residue. Residue Arg250 participates in NADPH binding. Glu276 serves as a coordination point for NADPH. Residues 312–369 are disordered; that stretch reads KDIAPHLTTDDEPQGERTRGERTTDDGQGQGRTSVWGSLKRAFDQLRDGGGSSRRDRP. Basic and acidic residues-rich tracts occupy residues 325 to 336 and 352 to 369; these read QGERTRGERTTD and RAFDQLRDGGGSSRRDRP.

It belongs to the NAD-dependent glycerol-3-phosphate dehydrogenase family.

The protein resides in the cytoplasm. It carries out the reaction sn-glycerol 3-phosphate + NAD(+) = dihydroxyacetone phosphate + NADH + H(+). The enzyme catalyses sn-glycerol 3-phosphate + NADP(+) = dihydroxyacetone phosphate + NADPH + H(+). It functions in the pathway membrane lipid metabolism; glycerophospholipid metabolism. Catalyzes the reduction of the glycolytic intermediate dihydroxyacetone phosphate (DHAP) to sn-glycerol 3-phosphate (G3P), the key precursor for phospholipid synthesis. This Leifsonia xyli subsp. xyli (strain CTCB07) protein is Glycerol-3-phosphate dehydrogenase [NAD(P)+].